Here is a 182-residue protein sequence, read N- to C-terminus: Ribosome-recycling factor (182 aa).

It belongs to the RRF family.

The protein localises to the cytoplasm. Responsible for the release of ribosomes from messenger RNA at the termination of protein biosynthesis. May increase the efficiency of translation by recycling ribosomes from one round of translation to another. The chain is Ribosome-recycling factor from Prochlorococcus marinus (strain SARG / CCMP1375 / SS120).